A 116-amino-acid chain; its full sequence is Vesicle-associated membrane protein 2 (116 aa).

The disordered stretch occupies residues 1–33; that stretch reads MSATAATAPPAAPAGEGGPPAPPPNLTSNRRLQ. Ser-2 carries the N-acetylserine modification. At 2–94 the chain is on the cytoplasmic side; that stretch reads SATAATAPPA…KRKYWWKNLK (93 aa). Positions 31 to 91 constitute a v-SNARE coiled-coil homology domain; that stretch reads RLQQTQAQVD…AKLKRKYWWK (61 aa). The interval 92 to 116 is required for interaction with SEPT8; that stretch reads NLKMMIILGVICAIILIIIIVYFST. Residues 95 to 114 form a helical; Anchor for type IV membrane protein membrane-spanning segment; it reads MMIILGVICAIILIIIIVYF. At 115 to 116 the chain is on the vesicular side; it reads ST.

Belongs to the synaptobrevin family. Part of the SNARE core complex containing SNAP25, VAMP2 and STX1A; this complex constitutes the basic catalytic machinery of the complex neurotransmitter release apparatus. Recruited to the SNARE complex following binding of the SNARE complex component STX1A to STXBP1. This complex binds to CPLX1. Interacts with POPDC1 and STX4. Interacts with VAPA and VAPB. Interacts with WDFY2, PRKCZ and PRKCI. Forms a complex with WDFY2 and PRKCZ. Interacts (via N-terminus) with KCNB1 (via N-terminus and C-terminus); stimulates the channel inactivation rate of KCNB1. Interacts with SEPT8; the interaction inhibits interaction of VAMP2 with SYP. Interacts with SYP; the interaction is inhibited by interaction with SEPT8. Interacts with PICALM. Interacts with alpha-synuclein/SNCA. Interacts with STX3. Phosphorylated by PRKCZ in vitro and this phosphorylation is increased in the presence of WDFY2. Post-translationally, (Microbial infection) Targeted and hydrolyzed by C.botulinum neurotoxin type B (BoNT/B, botB) which hydrolyzes the 76-Gln-|-Phe-77 bond and probably inhibits neurotransmitter release. In terms of processing, (Microbial infection) Targeted and hydrolyzed by C.botulinum neurotoxin type D (BoNT/D, botD) which probably hydrolyzes the 59-Lys-|-Leu-60 bond and inhibits neurotransmitter release. Note that humans are not known to be infected by C.botulinum type D. (Microbial infection) Targeted and hydrolyzed by C.botulinum neurotoxin type F (BoNT/F, botF) which hydrolyzes the 58-Gln-|-Lys-59 bond and probably inhibits neurotransmitter release. Post-translationally, (Microbial infection) Targeted and hydrolyzed by C.tetani tetanus toxin (tetX) which hydrolyzes the 76-Gln-|-Phe-77 bond and probably inhibits neurotransmitter release. Nervous system and skeletal muscle.

The protein resides in the cytoplasmic vesicle. Its subcellular location is the secretory vesicle. The protein localises to the synaptic vesicle membrane. It localises to the cell membrane. Its function is as follows. Involved in the targeting and/or fusion of transport vesicles to their target membrane. Major SNARE protein of synaptic vesicles which mediates fusion of synaptic vesicles to release neurotransmitters. Essential for fast vesicular exocytosis and activity-dependent neurotransmitter release as well as fast endocytosis that mediates rapid reuse of synaptic vesicles. Modulates the gating characteristics of the delayed rectifier voltage-dependent potassium channel KCNB1. The protein is Vesicle-associated membrane protein 2 of Homo sapiens (Human).